The following is a 124-amino-acid chain: Small ribosomal subunit protein bS6 (124 aa).

Belongs to the bacterial ribosomal protein bS6 family.

In terms of biological role, binds together with bS18 to 16S ribosomal RNA. This is Small ribosomal subunit protein bS6 from Haemophilus ducreyi (strain 35000HP / ATCC 700724).